The chain runs to 292 residues: UPF0725 protein At4g28920 (292 aa).

Acidic residues predominate over residues 1–17 (MSENDSSESDIEMDPEE). The tract at residues 1–24 (MSENDSSESDIEMDPEEEKVYRRQ) is disordered.

This sequence belongs to the UPF0725 (EMB2204) family.

This is UPF0725 protein At4g28920 from Arabidopsis thaliana (Mouse-ear cress).